The chain runs to 142 residues: HTH-type transcriptional regulator MntR (142 aa).

The region spanning Met-1–Thr-63 is the HTH dtxR-type domain. Mn(2+)-binding residues include Asp-8, Glu-11, His-77, Glu-99, Glu-102, and His-103.

Belongs to the DtxR/MntR family. Homodimer.

It localises to the cytoplasm. Its activity is regulated as follows. DNA binding is strongly activated by Mn(2+). Functionally, central regulator of manganese homeostasis. The sequence is that of HTH-type transcriptional regulator MntR from Bacillus mycoides (strain KBAB4) (Bacillus weihenstephanensis).